Here is a 183-residue protein sequence, read N- to C-terminus: Secreted RxLR effector protein 41 (183 aa).

A signal peptide spans 1–18 (MLGFVTGVLAISAHVIVS). The RxLR-dEER signature appears at 41-65 (RRLRSYETDTASARAEEGTSDIEER). The N-linked (GlcNAc...) asparagine glycan is linked to asparagine 88.

Belongs to the RxLR effector family.

The protein localises to the secreted. Its subcellular location is the host nucleus. It localises to the host cytoplasm. In terms of biological role, secreted effector that dos not suppress the host cell death induced by cell death-inducing proteins. The polypeptide is Secreted RxLR effector protein 41 (Plasmopara viticola (Downy mildew of grapevine)).